A 232-amino-acid chain; its full sequence is LexA repressor (232 aa).

Residues 26–46 (FDEMKDALDLRSKSGIHRLIT) constitute a DNA-binding region (H-T-H motif). Catalysis depends on for autocatalytic cleavage activity residues Ser-153 and Lys-191.

It belongs to the peptidase S24 family. Homodimer.

It carries out the reaction Hydrolysis of Ala-|-Gly bond in repressor LexA.. Represses a number of genes involved in the response to DNA damage (SOS response), including recA and lexA. In the presence of single-stranded DNA, RecA interacts with LexA causing an autocatalytic cleavage which disrupts the DNA-binding part of LexA, leading to derepression of the SOS regulon and eventually DNA repair. The protein is LexA repressor of Bradyrhizobium sp. (strain BTAi1 / ATCC BAA-1182).